The primary structure comprises 185 residues: Large ribosomal subunit protein uL5 (185 aa).

Belongs to the universal ribosomal protein uL5 family. Part of the 50S ribosomal subunit; part of the 5S rRNA/L5/L18/L25 subcomplex. Contacts the 5S rRNA and the P site tRNA. Forms a bridge to the 30S subunit in the 70S ribosome.

Functionally, this is one of the proteins that bind and probably mediate the attachment of the 5S RNA into the large ribosomal subunit, where it forms part of the central protuberance. In the 70S ribosome it contacts protein S13 of the 30S subunit (bridge B1b), connecting the 2 subunits; this bridge is implicated in subunit movement. Contacts the P site tRNA; the 5S rRNA and some of its associated proteins might help stabilize positioning of ribosome-bound tRNAs. This chain is Large ribosomal subunit protein uL5, found in Brucella abortus (strain 2308).